Consider the following 447-residue polypeptide: MLPPQLCWLPLLAALLPPVPAQKFSALTFLRVDQDKDRDCSLDCPSSPQKPLCASDGRTFLSRCEFQRAKCKDPQLEIAHRGNCKDVSRCVAERKYTQEQARKEFQQVFIPECNDDGTYSQVQCHSYTGYCWCVTPNGRPISGTAVAHKTPRCPGSINEKVPQREGAGKADDAAAPALETQPQGDEEDIASRYPTLWTEQVKSRQNKTNKNSASSCDQEHQSALEEAKQPKNDNVVIPECAHGGLYKPVQCHPSTGYCWCVLVDTGRPIPGTSTRYEQPKCDNTARAHPAKARDLYKNRPLQGCPGAKKHEFLTSVLDALSTDMVHAVSDPSSSSGRLSEPDPSHTLEERVVHWYFKLLDKNSSGDIGKKEIKPFKRFLRKKSKPKKCVKKFVEYCDMNNDKSITVQELMGCLGVTREEGKANTRKRHTPRGNAESSSSNRQPRKQG.

An N-terminal signal peptide occupies residues 1–21; sequence MLPPQLCWLPLLAALLPPVPA. Positions 34 to 86 constitute a Kazal-like domain; that stretch reads QDKDRDCSLDCPSSPQKPLCASDGRTFLSRCEFQRAKCKDPQLEIAHRGNCKD. Cystine bridges form between cysteine 40–cysteine 71, cysteine 44–cysteine 64, cysteine 53–cysteine 84, cysteine 90–cysteine 113, cysteine 124–cysteine 131, and cysteine 133–cysteine 153. Positions 87 to 153 constitute a Thyroglobulin type-1 1 domain; it reads VSRCVAERKY…TAVAHKTPRC (67 aa). The disordered stretch occupies residues 147–230; it reads AHKTPRCPGS…QSALEEAKQP (84 aa). Over residues 161-172 the composition is skewed to basic and acidic residues; the sequence is VPQREGAGKADD. Asparagine 206 carries an N-linked (GlcNAc...) asparagine glycan. A compositionally biased stretch (polar residues) spans 206–216; sequence NKTNKNSASSC. The region spanning 213 to 281 is the Thyroglobulin type-1 2 domain; sequence ASSCDQEHQS…TSTRYEQPKC (69 aa). Intrachain disulfides connect cysteine 216–cysteine 240, cysteine 251–cysteine 258, and cysteine 260–cysteine 281. Residues 217–230 are compositionally biased toward basic and acidic residues; that stretch reads DQEHQSALEEAKQP. 2 consecutive EF-hand domains span residues 347–382 and 384–419; these read LEER…LRKK and KPKK…TREE. The Ca(2+) site is built by aspartate 360, asparagine 362, serine 364, aspartate 366, glutamate 371, aspartate 397, asparagine 399, aspartate 401, serine 403, and glutamate 408. The N-linked (GlcNAc...) asparagine glycan is linked to asparagine 362. The segment at 416–447 is disordered; the sequence is TREEGKANTRKRHTPRGNAESSSSNRQPRKQG.

Binds various proteins from the extracellular matrix. Post-translationally, N-glycosylated. As to expression, strongly expressed in ovary, followed by heart, muscle, spleen, brain, thymus, lung, liver, kidney, spleen, testis, ovary and skeletal muscle.

It localises to the secreted. The protein resides in the extracellular space. It is found in the extracellular matrix. Its subcellular location is the basement membrane. Its function is as follows. Can stimulate endothelial cell proliferation, migration, as well as angiogenesis. Promotes matrix assembly and cell adhesiveness. The sequence is that of SPARC-related modular calcium-binding protein 2 (Smoc2) from Mus musculus (Mouse).